The following is a 72-amino-acid chain: Defensin-like protein 35 (72 aa).

Residues 1 to 22 (MASNKISFSFVLCLYMCSLLDA) form the signal peptide. 3 disulfides stabilise this stretch: Cys32-Cys58, Cys44-Cys67, and Cys48-Cys69.

It belongs to the DEFL family.

It localises to the secreted. In Arabidopsis thaliana (Mouse-ear cress), this protein is Defensin-like protein 35.